Reading from the N-terminus, the 719-residue chain is NF-kappa-B inhibitor zeta (719 aa).

Positions 46 to 81 (GACDGGCSASGPSAPGSPGSDSSDFSSASSVSSCGA) are enriched in low complexity. Positions 46–97 (GACDGGCSASGPSAPGSPGSDSSDFSSASSVSSCGAVESRPRGGARAERLQV) are disordered. Positions 84–97 (SRPRGGARAERLQV) are enriched in basic and acidic residues. The region spanning 108–130 (RGPFQGVRVKNSVKELLLHIRSH) is the OCA domain. Positions 164–179 (KRKGSDSLSDGPACKR) match the Nuclear localization signal motif. Disordered regions lie at residues 188–210 (LTPP…ESKQ) and 289–343 (YSPQ…FAPL). Positions 201–210 (EDVHHNESKQ) are enriched in basic and acidic residues. The tract at residues 322–394 (SYEPHLFGRE…LARPDASSTP (73 aa)) is required for transcriptional activity. Residues 405–719 (GGNPMSTTQL…KSIQQRAPPY (315 aa)) form an interaction with NFKB1/p50 region. ANK repeat units lie at residues 444-473 (DGDT…ALHM), 480-509 (NGQS…QVNT), 513-542 (WGRT…GSNQ), 552-581 (DGLT…HSPE), 583-608 (QELL…AVEA), 613-642 (SGRT…CLSF), and 649-682 (NGNT…DPST).

In terms of assembly, interacts with NFKB1/p50. Interacts with RELA. Interacts with AKIRIN2.

The protein localises to the nucleus. Its function is as follows. Involved in regulation of NF-kappa-B transcription factor complexes. Inhibits NF-kappa-B activity without affecting its nuclear translocation upon stimulation. Inhibits DNA-binding of RELA and NFKB1/p50, and of the NF-kappa-B p65-p50 heterodimer and the NF-kappa-B p50-p50 homodimer. Also seems to activate NF-kappa-B-mediated transcription. In vitro, upon association with NFKB1/p50 has transcriptional activation activity and, together with NFKB1/p50 and RELA, is recruited to LCN2 promoters. Promotes transcription of LCN2 and DEFB4. Is recruited to IL-6 promoters and activates IL-6 but decreases TNF-alpha production in response to LPS. Seems to be involved in the induction of inflammatory genes activated through TLR/IL-1 receptor signaling. Involved in the induction of T helper 17 cells (Th17) differentiation upon recognition of antigen by T cell antigen receptor (TCR). The chain is NF-kappa-B inhibitor zeta (NFKBIZ) from Bos taurus (Bovine).